The sequence spans 657 residues: Glycogen debranching enzyme (657 aa).

Asp-336 acts as the Nucleophile in catalysis. Glu-371 serves as the catalytic Proton donor. Residues 460-479 (ANGEENRDGTNNNYSNNHGK) form a disordered region.

It belongs to the glycosyl hydrolase 13 family.

The catalysed reaction is Hydrolysis of (1-&gt;6)-alpha-D-glucosidic linkages to branches with degrees of polymerization of three or four glucose residues in limit dextrin.. The protein operates within glycan degradation; glycogen degradation. In terms of biological role, removes maltotriose and maltotetraose chains that are attached by 1,6-alpha-linkage to the limit dextrin main chain, generating a debranched limit dextrin. The polypeptide is Glycogen debranching enzyme (Shigella dysenteriae serotype 1 (strain Sd197)).